The following is a 101-amino-acid chain: Biogenesis of lysosome-related organelles complex 1 subunit SNN1 (101 aa).

A coiled-coil region spans residues 62–100; sequence DSNEYKAQFKEVNNLQKRLQKITLRLKDLERRSSQLTTS.

It belongs to the SNAPIN family. As to quaternary structure, component of the biogenesis of lysosome-related organelles complex-1 (BLOC-1).

The protein localises to the endosome. Component of the biogenesis of lysosome-related organelles complex-1 (BLOC-1), a complex involved in endosomal cargo sorting. The sequence is that of Biogenesis of lysosome-related organelles complex 1 subunit SNN1 (SNN1) from Candida glabrata (strain ATCC 2001 / BCRC 20586 / JCM 3761 / NBRC 0622 / NRRL Y-65 / CBS 138) (Yeast).